A 613-amino-acid polypeptide reads, in one-letter code: Potassium voltage-gated channel subfamily A member 5 (613 aa).

The interval M1 to E108 is disordered. Positions M1–E211 are tetramerization domain. The Cytoplasmic portion of the chain corresponds to M1–G247. Basic and acidic residues predominate over residues G45–S62. 2 repeat units span residues D61–P71 and D72–P82. The interval D61–P82 is 2 X 11 AA tandem repeat of D-[SP]-G-V-R-P-L-P-P-L-P. The segment covering P66–E83 has biased composition (pro residues). The span at E84–P93 shows a compositional bias: basic and acidic residues. K221 participates in a covalent cross-link: Glycyl lysine isopeptide (Lys-Gly) (interchain with G-Cter in SUMO). The helical transmembrane segment at S248–L269 threads the bilayer. Residues E270–P323 lie on the Extracellular side of the membrane. Positions L282 to M304 are disordered. A compositionally biased stretch (pro residues) spans P285–A295. The helical transmembrane segment at F324 to A345 threads the bilayer. C346 carries the S-palmitoyl cysteine lipid modification. Residues C346–I356 are Cytoplasmic-facing. Residues M357–A377 form a helical membrane-spanning segment. At E378–S395 the chain is on the extracellular side. Residues L396 to H416 form a helical; Voltage-sensor membrane-spanning segment. The Cytoplasmic portion of the chain corresponds to S417 to M431. The segment at K418–M431 is S4-S5 linker. Residues R432–Y453 traverse the membrane as a helical segment. At F454 to I467 the chain is on the extracellular side. Residues P468–T479 constitute an intramembrane region (helical). Positions T480–D485 match the Selectivity filter motif. The stretch at T480–R487 is an intramembrane region. Topologically, residues P488–K494 are extracellular. Residues I495–Y523 traverse the membrane as a helical segment. Residues H524–L613 lie on the Cytoplasmic side of the membrane. The segment at P532–S559 is disordered. K536 is covalently cross-linked (Glycyl lysine isopeptide (Lys-Gly) (interchain with G-Cter in SUMO)). A Phosphoserine; by PKA modification is found at S557. A PDZ-binding motif is present at residues T611–L613.

The protein belongs to the potassium channel family. A (Shaker) (TC 1.A.1.2) subfamily. Kv1.5/KCNA5 sub-subfamily. As to quaternary structure, homotetramer and heterotetramer of potassium channel proteins. Interacts with DLG1, which enhances channel currents. Forms a ternary complex with DLG1 and CAV3. Interacts with KCNAB1. Interacts with UBE2I. Interacts with XIRP2; the interaction is required for normal action potential configuration in the heart. In terms of processing, glycosylated. Post-translationally, sumoylated on Lys-221, and Lys-536, preferentially with SUMO3. Sumoylation regulates the voltage sensitivity of the channel. Pancreatic islets and insulinoma.

The protein localises to the cell membrane. The catalysed reaction is K(+)(in) = K(+)(out). With respect to regulation, inhibited by 4-aminopyridine, nicotine, bepridil, correolide, and endothelin-1. In terms of biological role, voltage-gated potassium channel that mediates transmembrane potassium transport in excitable membranes. Forms tetrameric potassium-selective channels through which potassium ions pass in accordance with their electrochemical gradient. The channel alternates between opened and closed conformations in response to the voltage difference across the membrane. Can form functional homotetrameric channels and heterotetrameric channels that contain variable proportions of KCNA1, KCNA2, KCNA4, KCNA5, and possibly other family members as well; channel properties depend on the type of alpha subunits that are part of the channel. Channel properties are modulated by cytoplasmic beta subunits that regulate the subcellular location of the alpha subunits and promote rapid inactivation. Homotetrameric channels display rapid activation and slow inactivation. Required for normal electrical conduction including formation of the infranodal ventricular conduction system and normal action potential configuration, as a result of its interaction with XIRP2. May play a role in regulating the secretion of insulin in normal pancreatic islets. Functionally, exhibits a faster depolarization rate, reduced voltage-dependent recovery from inactivation and an excessive cumulative inactivation. This is Potassium voltage-gated channel subfamily A member 5 (KCNA5) from Homo sapiens (Human).